The sequence spans 151 residues: Mini-ribonuclease 3 (151 aa).

Asp28 is an active-site residue.

This sequence belongs to the MrnC RNase family. In terms of assembly, homodimer. Requires Mg(2+) as cofactor.

It is found in the cytoplasm. Involved in correct processing of both the 5' and 3' ends of 23S rRNA precursor. Processes 30S rRNA precursor transcript even in absence of ribonuclease 3 (Rnc); Rnc processes 30S rRNA into smaller rRNA precursors. The chain is Mini-ribonuclease 3 from Clostridium tetani (strain Massachusetts / E88).